We begin with the raw amino-acid sequence, 112 residues long: UPF0212 protein Mpal_1084 (112 aa).

The protein belongs to the UPF0212 family.

This is UPF0212 protein Mpal_1084 from Methanosphaerula palustris (strain ATCC BAA-1556 / DSM 19958 / E1-9c).